The primary structure comprises 1233 residues: NACHT, LRR and PYD domains-containing protein 1b allele 1 (1233 aa).

Residues 1 to 22 are disordered; sequence MEESPPKQKSNTKVAQHEGQQD. Positions 126–435 constitute an NACHT domain; that stretch reads QLVIIEGAAG…EFFAAISCIL (310 aa). 132-139 is a binding site for ATP; the sequence is GAAGIGKS. 2 LRR repeats span residues 627 to 647 and 684 to 704; these read NLEG…QSLC and SLTE…RMLC. Residues 850–983 are ZU5; sequence FWGPIGPVAT…GYTVLKNPSF (134 aa). The FIIND domain maps to 850–1133; that stretch reads FWGPIGPVAT…LRPALPRIAQ (284 aa). Positions 984–1133 are UPA; the sequence is SPMGVVLRII…LRPALPRIAQ (150 aa). The CARD domain maps to 1143-1226; the sequence is HFMDQHREQL…HLVMDLLEKS (84 aa).

The protein belongs to the NLRP family. Interacts with DPP9; leading to inhibit activation of the inflammasome. DPP9 acts via formation of a ternary complex, composed of a DPP9 homodimer, one full-length Nlrp1b protein, and one cleaved C-terminus of Nlrp1b (NACHT, LRR and PYD domains-containing protein 1b, C-terminus). Interacts with DPP8; leading to inhibit activation of the inflammasome, probably via formation of a ternary complex with DPP8. Interacts (via LRR repeats) with BCL2 and BCL2L1 (via the loop between motifs BH4 and BH3). Interacts with NOD2; this interaction may increase IL1B release. Interacts with EIF2AK2/PKR; this interaction requires EIF2AK2 activity, is accompanied by EIF2AK2 autophosphorylation and promotes inflammasome assembly in response to B.anthracis lethal toxin. Interacts with MEFV; this interaction targets Nlrp1b to degradation by autophagy, hence preventing excessive IL1B- and IL18-mediated inflammation. In terms of assembly, interacts with the C-terminal part of Nlrp1b (NACHT, LRR and PYD domains-containing protein 1b, C-terminus) in absence of pathogens and other damage-associated signals. As to quaternary structure, interacts with the N-terminal part of Nlrp1b (NACHT, LRR and PYD domains-containing protein 1b, N-terminus) in absence of pathogens and other damage-associated signals. Homomultimer; forms the Nlrp1b inflammasome polymeric complex, a filament composed of homopolymers of this form in response to pathogens and other damage-associated signals. The Nlrp1b inflammasome polymeric complex directly recruits pro-caspase-1 (proCASP1) independently of PYCARD/ASC. Interacts (via CARD domain) with CASP1 (via CARD domain); leading to CASP1 activation. Post-translationally, autocatalytically cleaved. Autocatalytic cleavage in FIIND region occurs constitutively, prior to activation signals, and is required for inflammasome activity (IL1B release), possibly by facilitating CASP1 binding. Both N- and C-terminal parts remain associated non-covalently. In terms of processing, ubiquitinated by UBR2, a component of the N-end rule pathway in response to pathogens and other damage-associated signals, leading to its degradation by the proteasome and subsequent release of the cleaved C-terminal part of the protein (NACHT, LRR and PYD domains-containing protein 1b, C-terminus), which polymerizes and forms the Nlrp1b inflammasome. (Microbial infection) Cleavage by B.anthracis lethal toxin (LT) endopeptidase promotes ubiquitination and degradation of the N-terminal part, releasing the cleaved C-terminal part of the protein (NACHT, LRR and PYD domains-containing protein 1b, C-terminus), which polymerizes and forms the Nlrp1b inflammasome. Post-translationally, (Microbial infection) Ubiquitinated by S.flexneri IpaH7.8, leading to its degradation by the proteasome and subsequent release of the cleaved C-terminal part of the protein (NACHT, LRR and PYD domains-containing protein 1b, C-terminus), which polymerizes and forms the Nlrp1b inflammasome. Widely expressed, including in macrophages.

It is found in the cytoplasm. Its subcellular location is the cytosol. It localises to the membrane. The protein resides in the inflammasome. Its activity is regulated as follows. Activated by cleavage by B.anthracis lethal toxin (LT) endopeptidase: cleavage by LT promotes ubiquitination and degradation of the N-terminal part, releasing the cleaved C-terminal part of the protein (NACHT, LRR and PYD domains-containing protein 1b, C-terminus), which polymerizes and forms the Nlrp1b inflammasome. Activated by S.flexneri IpaH7.8, an E3 ubiquitin ligase that mediates ubiquitination and degradation of the N-terminal part, releasing the cleaved C-terminal part of the protein, which polymerizes and forms the Nlrp1b inflammasome. Nlrp1b inflammasome is inhibited by DPP8 and DPP9, which sequester the C-terminal fragment of Nlrp1b (NACHT, LRR and PYD domains-containing protein 1b, C-terminus) in a ternary complex, thereby preventing Nlrp1b oligomerization and activation. Nlrp1b inflammasome is activated by Val-boroPro (Talabostat, PT-100), an inhibitor of dipeptidyl peptidases DPP8 and DPP9. Val-boroPro relieves inhibition of DPP8 and/or DPP9 by promoting disruption of the ternary complex, releasing its C-terminal part from autoinhibition. Activated by metabolic inhibitors, such as 2-deoxy-D-glucose and sodium azide, by nutrient deprivation and hypoxia, possibly due to a decrease in cytosolic ATP. Also activated by Toxoplasma gondii. Not activated by muramyl dipeptide, nor by full-length bacterial peptidoglycan. Contrary to its human ortholog, not activated by positive-strand RNA virus such as Semliki Forrest virus or long dsRNA. Acts as the sensor component of the Nlrp1b inflammasome, which mediates inflammasome activation in response to various pathogen-associated signals, leading to subsequent pyroptosis. Inflammasomes are supramolecular complexes that assemble in the cytosol in response to pathogens and other damage-associated signals and play critical roles in innate immunity and inflammation. Acts as a recognition receptor (PRR): recognizes specific pathogens and other damage-associated signals, such as B.anthracis lethal toxin (LT) or Val-boroPro inhibitor, and mediates the formation of the inflammasome polymeric complex. In response to pathogen-associated signals, the N-terminal part of Nlrp1b is degraded by the proteasome, releasing the cleaved C-terminal part of the protein (NACHT, LRR and PYD domains-containing protein 1b, C-terminus), which polymerizes to initiate the formation of the inflammasome complex: the inflammasome directly recruits pro-caspase-1 (proCASP1) independently of PYCARD/ASC and promotes caspase-1 (CASP1) activation, which subsequently cleaves and activates inflammatory cytokines IL1B and IL18 and gasdermin-D (GSDMD), leading to pyroptosis. In the absence of GSDMD expression, the Nlrp1b inflammasome is able to recruit and activate CASP8, leading to activation of gasdermin-E (GSDME). Activation of Nlrp1b inflammasome is also required for HMGB1 secretion; the active cytokines and HMGB1 stimulate inflammatory responses. Primary mediator of macrophage susceptibility to B.anthracis LT: in response to B.anthracis infection, macrophages and dendritic cells release IL1B and undergo pyroptosis. This early inflammatory response to the toxin increases resistance to infection by B.anthracis spores. Functionally, constitutes the precursor of the Nlrp1b inflammasome, which mediates autoproteolytic processing within the FIIND domain to generate the N-terminal and C-terminal parts, which are associated non-covalently in absence of pathogens and other damage-associated signals. In terms of biological role, regulatory part that prevents formation of the Nlrp1b inflammasome: in absence of pathogens and other damage-associated signals, interacts with the C-terminal part of Nlrp1b (NACHT, LRR and PYD domains-containing protein 1b, C-terminus), preventing activation of the Nlrp1b inflammasome. In response to pathogen-associated signals, this part is ubiquitinated by the N-end rule pathway and degraded by the proteasome, releasing the cleaved C-terminal part of the protein, which polymerizes and forms the Nlrp1b inflammasome. Its function is as follows. Constitutes the active part of the Nlrp1b inflammasome. In absence of pathogens and other damage-associated signals, interacts with the N-terminal part of Nlrp1b (NACHT, LRR and PYD domains-containing protein 1b, N-terminus), preventing activation of the Nlrp1b inflammasome. In response to pathogen-associated signals, the N-terminal part of Nlrp1b is degraded by the proteasome, releasing this form, which polymerizes to form the Nlrp1b inflammasome complex: the Nlrp1b inflammasome complex then directly recruits pro-caspase-1 (proCASP1) and promotes caspase-1 (CASP1) activation, leading to gasdermin-D (GSDMD) cleavage and subsequent pyroptosis. This Mus musculus (Mouse) protein is NACHT, LRR and PYD domains-containing protein 1b allele 1.